The following is a 351-amino-acid chain: Biotin synthase (351 aa).

Positions 58–285 (NTVQLSTLLS…RAMVRLSAGR (228 aa)) constitute a Radical SAM core domain. Residues Cys-73, Cys-77, and Cys-80 each coordinate [4Fe-4S] cluster. The [2Fe-2S] cluster site is built by Cys-117, Cys-148, Cys-208, and Arg-280.

Belongs to the radical SAM superfamily. Biotin synthase family. In terms of assembly, homodimer. [4Fe-4S] cluster is required as a cofactor. The cofactor is [2Fe-2S] cluster.

The enzyme catalyses (4R,5S)-dethiobiotin + (sulfur carrier)-SH + 2 reduced [2Fe-2S]-[ferredoxin] + 2 S-adenosyl-L-methionine = (sulfur carrier)-H + biotin + 2 5'-deoxyadenosine + 2 L-methionine + 2 oxidized [2Fe-2S]-[ferredoxin]. It participates in cofactor biosynthesis; biotin biosynthesis; biotin from 7,8-diaminononanoate: step 2/2. Catalyzes the conversion of dethiobiotin (DTB) to biotin by the insertion of a sulfur atom into dethiobiotin via a radical-based mechanism. The sequence is that of Biotin synthase from Paraburkholderia phymatum (strain DSM 17167 / CIP 108236 / LMG 21445 / STM815) (Burkholderia phymatum).